The following is a 493-amino-acid chain: Tripartite motif-containing protein 5 (493 aa).

At alanine 2 the chain carries N-acetylalanine. An RING-type zinc finger spans residues 15–59 (CPICLELLTQPLSLDCGHSFCQACLTANHKKSMLDKGESSCPVCR). Position 86 is a phosphoserine (serine 86). The B box-type zinc-finger motif lies at 90–132 (QKVDHCAHHGEKLLLFCQEDGKVICWLCERSQEHRGHHTFLTE). Positions 95, 98, 117, and 123 each coordinate Zn(2+). Residues 131 to 240 (TEEVAREYQV…LISDLERRLQ (110 aa)) adopt a coiled-coil conformation. The segment at 185–198 (FEQLRDILDWEESN) is required for interaction with GABARAP and for autophagy. One can recognise a B30.2/SPRY domain in the interval 281–493 (LKGMLEVFRE…VPMTLCSPSS (213 aa)).

The protein belongs to the TRIM/RBCC family. In terms of assembly, can form homodimers and homotrimers. In addition to lower-order dimerization, also exhibits a higher-order multimerization and both low- and high-order multimerizations are essential for its restriction activity. Interacts with BTBD1 and BTBD2. Interacts with PSMC4, PSMC5, PSMD7 and HSPA8/HSC70. Interacts (via B30.2/SPRY domain) with HSPA1A/B. Interacts with PSMC2, MAP3K7/TAK1, TAB2 and TAB3. Interacts with SQSTM1. Interacts with TRIM6 and TRIM34. Interacts with ULK1 (phosphorylated form), GABARAP, GABARAPL1, GABARAPL2, MAP1LC3A, MAP1LC3C and BECN1. In terms of processing, degraded in a proteasome-independent fashion in the absence of viral infection but in a proteasome-dependent fashion following exposure to restriction sensitive virus. Autoubiquitinated in a RING finger- and UBE2D2-dependent manner. Monoubiquitinated by TRIM21. Deubiquitinated by Yersinia YopJ. Ubiquitination may not lead to proteasomal degradation.

Its subcellular location is the cytoplasm. It localises to the nucleus. It carries out the reaction S-ubiquitinyl-[E2 ubiquitin-conjugating enzyme]-L-cysteine + [acceptor protein]-L-lysine = [E2 ubiquitin-conjugating enzyme]-L-cysteine + N(6)-ubiquitinyl-[acceptor protein]-L-lysine.. The protein operates within protein modification; protein ubiquitination. Functionally, capsid-specific restriction factor that prevents infection from non-host-adapted retroviruses. Blocks viral replication early in the life cycle, after viral entry but before reverse transcription. In addition to acting as a capsid-specific restriction factor, also acts as a pattern recognition receptor that activates innate immune signaling in response to the retroviral capsid lattice. Binding to the viral capsid triggers its E3 ubiquitin ligase activity, and in concert with the heterodimeric ubiquitin conjugating enzyme complex UBE2V1-UBE2N (also known as UBC13-UEV1A complex) generates 'Lys-63'-linked polyubiquitin chains, which in turn are catalysts in the autophosphorylation of the MAP3K7/TAK1 complex (includes TAK1, TAB2, and TAB3). Activation of the MAP3K7/TAK1 complex by autophosphorylation results in the induction and expression of NF-kappa-B and MAPK-responsive inflammatory genes, thereby leading to an innate immune response in the infected cell. Plays a role in regulating autophagy through activation of autophagy regulator BECN1 by causing its dissociation from its inhibitors BCL2 and TAB2. This is Tripartite motif-containing protein 5 (TRIM5) from Pan troglodytes (Chimpanzee).